We begin with the raw amino-acid sequence, 230 residues long: Ribonuclease 3 (230 aa).

The 130-residue stretch at 5-134 (EALLENSFNI…FLGALLLDKG (130 aa)) folds into the RNase III domain. Glu-47 is a Mg(2+) binding site. Asp-51 is an active-site residue. 2 residues coordinate Mg(2+): Asp-120 and Glu-123. Glu-123 is a catalytic residue. Residues 160–229 (DYKTCLQELL…AKNALAQLSE (70 aa)) form the DRBM domain.

Belongs to the ribonuclease III family. In terms of assembly, homodimer. Requires Mg(2+) as cofactor.

The protein resides in the cytoplasm. The catalysed reaction is Endonucleolytic cleavage to 5'-phosphomonoester.. Its function is as follows. Digests double-stranded RNA. Involved in the processing of primary rRNA transcript to yield the immediate precursors to the large and small rRNAs (23S and 16S). Processes some mRNAs, and tRNAs when they are encoded in the rRNA operon. Processes pre-crRNA and tracrRNA of type II CRISPR loci if present in the organism. The chain is Ribonuclease 3 from Streptococcus equi subsp. zooepidemicus (strain H70).